Consider the following 152-residue polypeptide: Transcriptional repressor NrdR (152 aa).

The segment at 3–34 (CPFCNAADSKVIDSRLAAEGCQIRRRRECVSC) is a zinc-finger region. The 91-residue stretch at 49 to 139 (PRVIKSNGKN…VYQDFQDVEA (91 aa)) folds into the ATP-cone domain.

This sequence belongs to the NrdR family. Zn(2+) serves as cofactor.

In terms of biological role, negatively regulates transcription of bacterial ribonucleotide reductase nrd genes and operons by binding to NrdR-boxes. The polypeptide is Transcriptional repressor NrdR (Acinetobacter baumannii (strain AB0057)).